The sequence spans 815 residues: Subtilisin-like protease SBT2.5 (815 aa).

The signal sequence occupies residues 1–19 (MDIGLRIFVVFVLLVAVTA). The region spanning 21–124 (VYIVTMEGDP…RSVDKDWKVR (104 aa)) is the Inhibitor I9 domain. Residues 120 to 671 (DWKVRRLTTH…SGHVNPSAAL (552 aa)) enclose the Peptidase S8 domain. Catalysis depends on charge relay system residues D160 and H234. One can recognise a PA domain in the interval 397–501 (TLVSANDVLL…VSKSMDLIDY (105 aa)). 2 N-linked (GlcNAc...) asparagine glycosylation sites follow: N503 and N577. S596 functions as the Charge relay system in the catalytic mechanism. A glycan (N-linked (GlcNAc...) asparagine) is linked at N701.

Belongs to the peptidase S8 family. As to expression, expressed in roots, leaves and flowers of mature plants.

This chain is Subtilisin-like protease SBT2.5, found in Arabidopsis thaliana (Mouse-ear cress).